A 305-amino-acid chain; its full sequence is Phosphoribosylaminoimidazole-succinocarboxamide synthase (305 aa).

Belongs to the SAICAR synthetase family.

It carries out the reaction 5-amino-1-(5-phospho-D-ribosyl)imidazole-4-carboxylate + L-aspartate + ATP = (2S)-2-[5-amino-1-(5-phospho-beta-D-ribosyl)imidazole-4-carboxamido]succinate + ADP + phosphate + 2 H(+). Its pathway is purine metabolism; IMP biosynthesis via de novo pathway; 5-amino-1-(5-phospho-D-ribosyl)imidazole-4-carboxamide from 5-amino-1-(5-phospho-D-ribosyl)imidazole-4-carboxylate: step 1/2. The polypeptide is Phosphoribosylaminoimidazole-succinocarboxamide synthase (Polaromonas naphthalenivorans (strain CJ2)).